We begin with the raw amino-acid sequence, 764 residues long: Polymeric immunoglobulin receptor (764 aa).

The signal sequence occupies residues 1–18 (MLLFVLTCLLAVFPAIST). The Ig-like V-type 1; required for binding to polymeric IgA and IgM domain maps to 19 to 120 (KSPIFGPEEV…GLGINSRGLS (102 aa)). The Extracellular segment spans residues 19-638 (KSPIFGPEEV…SSEEQGGSSR (620 aa)). Disulfide bonds link C40–C110 and C56–C64. Residues N83, N90, N135, and N186 are each glycosylated (N-linked (GlcNAc...) asparagine). Ig-like V-type domains lie at 145–237 (GRTV…DLQV), 250–352 (RGSV…ESTI), 364–458 (GGSV…IKII), and 462–561 (PNLK…VYVA). 5 disulfide bridges follow: C152-C220, C257-C325, C271-C279, C371-C441, and C385-C395. N421 carries N-linked (GlcNAc...) asparagine glycosylation. A glycan (N-linked (GlcNAc...) (complex) asparagine) is linked at N469. 3 disulfides stabilise this stretch: C482/C544, C486/C520, and C496/C503. N-linked (GlcNAc...) asparagine glycosylation occurs at N499. A compositionally biased stretch (basic and acidic residues) spans 609 to 619 (KAVADTRDQAD). The interval 609 to 637 (KAVADTRDQADGSRASVDSGSSEEQGGSS) is disordered. The segment covering 627–637 (SGSSEEQGGSS) has biased composition (low complexity). A helical membrane pass occupies residues 639–661 (ALVSTLVPLGLVLAVGAVAVGVA). Over 662–764 (RARHRKNVDR…AEAQDGPQEA (103 aa)) the chain is Cytoplasmic. S673, S682, S689, and S735 each carry phosphoserine. A disordered region spans residues 717–738 (ATTESTTETKEPKKAKRSSKEE). Basic and acidic residues predominate over residues 723 to 738 (TETKEPKKAKRSSKEE).

As to quaternary structure, interacts (mainly via CDR1-like domain) with dimeric IgA. Interacts (mainly via CDR2-like domain) with pentameric IgM. In terms of assembly, either free or part of the secretory IgA (sIgA) complex that consists of two, four or five IgA monomers, and two additional non-Ig polypeptides, namely the JCHAIN and the secretory component (the proteolytic product of PIGR). Free secretory component interacts with bacterial antigens toxA of C.difficile and eaeA of E.coli. Post-translationally, N-glycosylated. N-glycosylation is required for anchoring IgA molecules to mucus, but is not necessary for Ig binding.

It localises to the cell membrane. Its subcellular location is the secreted. Its function is as follows. Mediates selective transcytosis of polymeric IgA and IgM across mucosal epithelial cells. Binds polymeric IgA and IgM at the basolateral surface of epithelial cells. The complex is then transported across the cell to be secreted at the apical surface. During this process, a cleavage occurs that separates the extracellular (known as the secretory component) from the transmembrane segment. In terms of biological role, through its N-linked glycans ensures anchoring of secretory IgA (sIgA) molecules to mucus lining the epithelial surface to neutralize extracellular pathogens. On its own (free form) may act as a non-specific microbial scavenger to prevent pathogen interaction with epithelial cells. The chain is Polymeric immunoglobulin receptor (PIGR) from Homo sapiens (Human).